Reading from the N-terminus, the 150-residue chain is uncharacterized protein (150 aa).

3 consecutive transmembrane segments (helical) span residues 50–70 (VVSV…VIHL), 80–100 (LYIT…QLWL), and 127–147 (KVVI…FFIE).

It localises to the membrane. This is an uncharacterized protein from Schizosaccharomyces pombe (strain 972 / ATCC 24843) (Fission yeast).